Consider the following 89-residue polypeptide: Putative antitoxin VapB42 (89 aa).

Possibly the antitoxin component of a type II toxin-antitoxin (TA) system. Its cognate toxin is VapC42 (Potential). The sequence is that of Putative antitoxin VapB42 (vapB42) from Mycobacterium tuberculosis (strain CDC 1551 / Oshkosh).